A 60-amino-acid polypeptide reads, in one-letter code: Bowman-Birk type proteinase inhibitor C1 (60 aa).

4 disulfide bridges follow: cysteine 5–cysteine 21, cysteine 11–cysteine 19, cysteine 28–cysteine 35, and cysteine 32–cysteine 49.

The protein belongs to the Bowman-Birk serine protease inhibitor family. Expressed in bulb (at protein level).

Functionally, serine protease inhibitor. Strongly inhibits trypsin (Ki = 0.22 nM) and very weakly inhibits chymotrypsin (Ki = 1200 nM). Does not inhibit bacterial subtilisin. The sequence is that of Bowman-Birk type proteinase inhibitor C1 from Hyacinthus orientalis (Common hyacinth).